A 220-amino-acid polypeptide reads, in one-letter code: 7-cyano-7-deazaguanine synthase (220 aa).

Position 7-17 (7-17 (LSGGLDSAVCL)) interacts with ATP. Residues Cys191, Cys199, Cys202, and Cys205 each coordinate Zn(2+).

The protein belongs to the QueC family. Homodimer. Zn(2+) is required as a cofactor.

The catalysed reaction is 7-carboxy-7-deazaguanine + NH4(+) + ATP = 7-cyano-7-deazaguanine + ADP + phosphate + H2O + H(+). It functions in the pathway purine metabolism; 7-cyano-7-deazaguanine biosynthesis. Catalyzes the ATP-dependent conversion of 7-carboxy-7-deazaguanine (CDG) to 7-cyano-7-deazaguanine (preQ(0)). In Desulforudis audaxviator (strain MP104C), this protein is 7-cyano-7-deazaguanine synthase.